The following is an 81-amino-acid chain: Teretoxin Tsu6.8 (81 aa).

An N-terminal signal peptide occupies residues 1–21 (MATSGRLLCLCLVLGLIFESL). A propeptide spanning residues 22–45 (GHPVMGEKRAGENASPSARSLPKR) is cleaved from the precursor.

The protein belongs to the teretoxin M (TM) superfamily. Post-translationally, contains 3 disulfide bonds. As to expression, expressed by the venom duct.

The protein localises to the secreted. In Terebra subulata (Chocolate spotted auger), this protein is Teretoxin Tsu6.8.